The chain runs to 292 residues: AKT-interacting protein (292 aa).

Positions 1–11 are enriched in polar residues; that stretch reads MNPFWSMSTSS. The segment at 1 to 63 is disordered; that stretch reads MNPFWSMSTS…TSPAPAAQST (63 aa). The segment covering 14–23 has biased composition (basic and acidic residues); it reads KRSEGEEKTL. Ser-30 bears the Phosphoserine mark. The region spanning 74 to 222 is the UBC core domain; it reads YLEYSLLAEF…VVDSVKVCTA (149 aa).

Belongs to the ubiquitin-conjugating enzyme family. FTS subfamily. In terms of assembly, component of the FTS/Hook/FHIP complex (FHF complex), composed of AKTIP/FTS, FHIP1B, and one or more members of the Hook family of proteins HOOK1, HOOK2, and HOOK3. Interacts directly with HOOK1, HOOK2 and HOOK3. The FHF complex associates with the homotypic vesicular sorting complex (the HOPS complex). Also interacts with AKT1. May interact with FHIP1A.

It localises to the cytoplasm. It is found in the cell membrane. Functionally, component of the FTS/Hook/FHIP complex (FHF complex). The FHF complex may function to promote vesicle trafficking and/or fusion via the homotypic vesicular protein sorting complex (the HOPS complex). Regulates apoptosis by enhancing phosphorylation and activation of AKT1. Increases release of TNFSF6 via the AKT1/GSK3B/NFATC1 signaling cascade. FHF complex promotes the distribution of AP-4 complex to the perinuclear area of the cell. The sequence is that of AKT-interacting protein from Homo sapiens (Human).